The chain runs to 899 residues: AP-3 complex subunit delta (899 aa).

HEAT repeat units follow at residues 37-74 (QSPEQLHEFLTRVLSECREEVKHADFNMKTNAVLKLTY), 155-192 (ELARDICEDLFLMLHSTKPYIRKKAVTALFKVFLQYPE), 194-229 (LRDNFEKFVDRLEDDDLSVVSATVSVICELSKHNPQ), 231-267 (FIQLSPILYQMLIKVDNNWVIIRLLKLFTNLAQIEPK), 268-305 (LRVKILPNVLELMDSTTAISVVYESINCIVKGNMLNSD), 308-344 (DSAVACLDKLHDFCTSNDPNLRYLSCVLFYKIGKINT), 345-382 (DFIANFDVLILRLLVDVDVSIRSKTLELLEGIVTEDNL), 384-428 (DFVQ…ITAM), 480-518 (RTLAQIVQLVKSEDITARLPGVLKECIWCLGEYSSLLDN), 536-580 (ELQQ…LIIS), 590-613 (SEALEFLRLCLDSLSEDASDSLPL), and 614-656 (LLTE…TESE). Disordered stretches follow at residues 668–701 (DGIVSPDVSDTESDSEMYVPGAAPKDKGSSPTHE), 741–768 (NLSNSKPSSSGSLVRLSSESKAKEKKKK), 782–801 (GVNTADVTDDRPSNTPSARN), and 849–899 (AAEE…LTTE). Residues 743–759 (SNSKPSSSGSLVRLSSE) show a composition bias toward low complexity. Residues 841–862 (QRLLDESAAAEEEVVVVKKKKR) adopt a coiled-coil conformation. The span at 857–880 (VKKKKRSKDGSKSSKKKSRSKSKP) shows a compositional bias: basic residues.

Belongs to the adaptor complexes large subunit family. In terms of assembly, adaptor protein complex 3 (AP-3) is a heterotetramer composed of 2 large adaptins (APL5 and APL6), a medium adaptin (APM3) and a small adaptin (APS3).

Its subcellular location is the golgi apparatus. It is found in the cytoplasmic vesicle. It localises to the clathrin-coated vesicle membrane. Part of the AP-3 complex, an adaptor-related complex which is not clathrin-associated. The complex is associated with the Golgi region as well as more peripheral structures. It facilitates the budding of vesicles from the Golgi membrane and may be directly involved in trafficking to the vacuole. This is AP-3 complex subunit delta (APL5) from Eremothecium gossypii (strain ATCC 10895 / CBS 109.51 / FGSC 9923 / NRRL Y-1056) (Yeast).